The primary structure comprises 20 residues: Cytochrome c oxidase subunit 5A-1, mitochondrial (20 aa).

The protein belongs to the cytochrome c oxidase subunit 5A family. As to quaternary structure, component of the cytochrome c oxidase (complex IV, CIV), a multisubunit enzyme composed of 14 subunits. The complex is composed of a catalytic core of 3 subunits MT-CO1, MT-CO2 and MT-CO3, encoded in the mitochondrial DNA, and 11 supernumerary subunits COX4I, COX5A, COX5B, COX6A, COX6B, COX6C, COX7A, COX7B, COX7C, COX8 and NDUFA4, which are encoded in the nuclear genome. The complex exists as a monomer or a dimer and forms supercomplexes (SCs) in the inner mitochondrial membrane with NADH-ubiquinone oxidoreductase (complex I, CI) and ubiquinol-cytochrome c oxidoreductase (cytochrome b-c1 complex, complex III, CIII), resulting in different assemblies (supercomplex SCI(1)III(2)IV(1) and megacomplex MCI(2)III(2)IV(2)). Interacts with AFG1L. Interacts with RAB5IF.

Its subcellular location is the mitochondrion inner membrane. It participates in energy metabolism; oxidative phosphorylation. Its function is as follows. Component of the cytochrome c oxidase, the last enzyme in the mitochondrial electron transport chain which drives oxidative phosphorylation. The respiratory chain contains 3 multisubunit complexes succinate dehydrogenase (complex II, CII), ubiquinol-cytochrome c oxidoreductase (cytochrome b-c1 complex, complex III, CIII) and cytochrome c oxidase (complex IV, CIV), that cooperate to transfer electrons derived from NADH and succinate to molecular oxygen, creating an electrochemical gradient over the inner membrane that drives transmembrane transport and the ATP synthase. Cytochrome c oxidase is the component of the respiratory chain that catalyzes the reduction of oxygen to water. Electrons originating from reduced cytochrome c in the intermembrane space (IMS) are transferred via the dinuclear copper A center (CU(A)) of subunit 2 and heme A of subunit 1 to the active site in subunit 1, a binuclear center (BNC) formed by heme A3 and copper B (CU(B)). The BNC reduces molecular oxygen to 2 water molecules using 4 electrons from cytochrome c in the IMS and 4 protons from the mitochondrial matrix. This Thunnus obesus (Bigeye tuna) protein is Cytochrome c oxidase subunit 5A-1, mitochondrial.